A 266-amino-acid chain; its full sequence is Undecaprenyl-diphosphatase (266 aa).

A run of 8 helical transmembrane segments spans residues 1-21, 39-59, 87-107, 111-131, 149-169, 183-203, 218-238, and 246-266; these read METF…FLPI, QGFS…VIYF, WWII…KDFI, LRNT…LWWA, ALLI…RSGA, AAAK…AILV, ALGI…YYFL, and MTPF…LILW.

It belongs to the UppP family.

The protein localises to the cell inner membrane. The enzyme catalyses di-trans,octa-cis-undecaprenyl diphosphate + H2O = di-trans,octa-cis-undecaprenyl phosphate + phosphate + H(+). Functionally, catalyzes the dephosphorylation of undecaprenyl diphosphate (UPP). Confers resistance to bacitracin. In Shewanella denitrificans (strain OS217 / ATCC BAA-1090 / DSM 15013), this protein is Undecaprenyl-diphosphatase.